A 309-amino-acid chain; its full sequence is uncharacterized protein (309 aa).

The RPE1 insert domain occupies 9–55 (NFLYNIANKDGFKGYKECRTSAYKNVFDDSSTKSTSKFHLGISDTKN). A helical membrane pass occupies residues 62–82 (IIGLILIIFAGVLFYAYILQH).

Belongs to the LicD transferase family.

Its subcellular location is the membrane. This is an uncharacterized protein from Rickettsia typhi (strain ATCC VR-144 / Wilmington).